The primary structure comprises 431 residues: 3-phosphoshikimate 1-carboxyvinyltransferase (431 aa).

3-phosphoshikimate is bound by residues lysine 21, serine 22, and arginine 26. Phosphoenolpyruvate is bound at residue lysine 21. Residues glycine 93 and arginine 122 each contribute to the phosphoenolpyruvate site. Residues serine 167, glutamine 169, aspartate 318, and lysine 345 each coordinate 3-phosphoshikimate. Position 169 (glutamine 169) interacts with phosphoenolpyruvate. Aspartate 318 serves as the catalytic Proton acceptor. Residues arginine 349 and arginine 391 each coordinate phosphoenolpyruvate.

It belongs to the EPSP synthase family. In terms of assembly, monomer.

The protein resides in the cytoplasm. The catalysed reaction is 3-phosphoshikimate + phosphoenolpyruvate = 5-O-(1-carboxyvinyl)-3-phosphoshikimate + phosphate. It participates in metabolic intermediate biosynthesis; chorismate biosynthesis; chorismate from D-erythrose 4-phosphate and phosphoenolpyruvate: step 6/7. Catalyzes the transfer of the enolpyruvyl moiety of phosphoenolpyruvate (PEP) to the 5-hydroxyl of shikimate-3-phosphate (S3P) to produce enolpyruvyl shikimate-3-phosphate and inorganic phosphate. The polypeptide is 3-phosphoshikimate 1-carboxyvinyltransferase (Roseiflexus castenholzii (strain DSM 13941 / HLO8)).